Here is a 923-residue protein sequence, read N- to C-terminus: Inorganic phosphate transporter PHO87 (923 aa).

The SPX domain maps to methionine 1 to glutamate 334. Over methionine 1 to lysine 461 the chain is Extracellular. Disordered regions lie at residues glutamate 40–lysine 74 and phenylalanine 86–asparagine 107. Over residues lysine 95–isoleucine 104 the composition is skewed to basic and acidic residues. Residue lysine 102 forms a Glycyl lysine isopeptide (Lys-Gly) (interchain with G-Cter in ubiquitin) linkage. N-linked (GlcNAc...) asparagine glycans are attached at residues asparagine 162, asparagine 202, and asparagine 274. A helical membrane pass occupies residues isoleucine 462–valine 482. The Cytoplasmic portion of the chain corresponds to glutamate 483–cysteine 493. Residues alanine 494–leucine 514 traverse the membrane as a helical segment. The Extracellular portion of the chain corresponds to threonine 515–glutamate 537. The chain crosses the membrane as a helical span at residues isoleucine 538–glutamate 558. The Cytoplasmic portion of the chain corresponds to alanine 559–asparagine 583. The chain crosses the membrane as a helical span at residues valine 584–serine 604. The Extracellular segment spans residues proline 605 to lysine 627. Residues alanine 628–serine 648 traverse the membrane as a helical segment. The Cytoplasmic segment spans residues proline 649 to glutamine 667. A helical membrane pass occupies residues phenylalanine 668–isoleucine 688. Residues leucine 689–arginine 707 are Extracellular-facing. Residues phenylalanine 708 to valine 728 traverse the membrane as a helical segment. Over glutamate 729–alanine 735 the chain is Cytoplasmic. The helical transmembrane segment at phenylalanine 736–leucine 756 threads the bilayer. The Extracellular portion of the chain corresponds to serine 757–serine 767. The chain crosses the membrane as a helical span at residues isoleucine 768–leucine 788. The Cytoplasmic portion of the chain corresponds to valine 789–aspartate 802. The helical transmembrane segment at glycine 803–serine 823 threads the bilayer. Topologically, residues histidine 824–proline 849 are extracellular. Residues isoleucine 850 to phenylalanine 870 traverse the membrane as a helical segment. At proline 871 to proline 898 the chain is on the cytoplasmic side. The chain crosses the membrane as a helical span at residues alanine 899–leucine 919. The Extracellular portion of the chain corresponds to lysine 920 to threonine 923.

The protein belongs to the CitM (TC 2.A.11) transporter family.

Its subcellular location is the membrane. Its function is as follows. Involved in the uptake of inorganic phosphate. The chain is Inorganic phosphate transporter PHO87 (PHO87) from Saccharomyces cerevisiae (strain ATCC 204508 / S288c) (Baker's yeast).